An 847-amino-acid chain; its full sequence is Phenylalanine--tRNA ligase beta subunit (847 aa).

Residues 40–168 enclose the tRNA-binding domain; that stretch reads FGIEGPVVVG…LDPEVGADAV (129 aa). The region spanning 426–501 is the B5 domain; sequence ADAEPIRLPD…RIVGFDRIPS (76 aa). Residues Asp-479, Asp-485, Glu-488, and Glu-489 each coordinate Mg(2+). The FDX-ACB domain occupies 753–846; sequence AGFPAATQDL…AGQLFGAAIR (94 aa).

It belongs to the phenylalanyl-tRNA synthetase beta subunit family. Type 1 subfamily. As to quaternary structure, tetramer of two alpha and two beta subunits. The cofactor is Mg(2+).

The protein resides in the cytoplasm. It carries out the reaction tRNA(Phe) + L-phenylalanine + ATP = L-phenylalanyl-tRNA(Phe) + AMP + diphosphate + H(+). The sequence is that of Phenylalanine--tRNA ligase beta subunit from Leifsonia xyli subsp. xyli (strain CTCB07).